The sequence spans 523 residues: DNA-directed primase/polymerase protein (523 aa).

Substrate contacts are provided by residues arginine 78, 117 to 119 (DLE), and 168 to 172 (KFSHH). Residues aspartate 117 and glutamate 119 each coordinate Mn(2+). The interval 203–230 (LKKSNPEAPGENRDDVEGTQAKRRKTEE) is disordered. Substrate is bound by residues 258-261 (RNFR) and lysine 267. Residues cysteine 390, histidine 397, cysteine 417, and cysteine 422 each coordinate Zn(2+). Positions 390 to 423 (CHNVKRFHKSNNIIIVVDLKEEVWYQKCHDPECR) match the Zinc knuckle motif motif. Low complexity predominate over residues 467–477 (APAESTSTTPS). The interval 467-523 (APAESTSTTPSEDTEGWGDWPDDPAYLRALQEVEEEEEDEDEEVPDELLLQAVNECE) is disordered. Composition is skewed to acidic residues over residues 478–488 (EDTEGWGDWPD) and 498–512 (EVEE…EVPD).

The protein belongs to the eukaryotic-type primase small subunit family. Mn(2+) is required as a cofactor.

It localises to the nucleus. Its subcellular location is the mitochondrion matrix. The protein resides in the chromosome. It catalyses the reaction ssDNA + n NTP = ssDNA/pppN(pN)n-1 hybrid + (n-1) diphosphate.. The catalysed reaction is DNA(n) + a 2'-deoxyribonucleoside 5'-triphosphate = DNA(n+1) + diphosphate. Functionally, DNA primase and DNA polymerase required to tolerate replication-stalling lesions by bypassing them. Required to facilitate mitochondrial and nuclear replication fork progression by initiating de novo DNA synthesis using dNTPs and acting as an error-prone DNA polymerase able to bypass certain DNA lesions. Shows a high capacity to tolerate DNA damage lesions such as 8oxoG and abasic sites in DNA. Provides different translesion synthesis alternatives when DNA replication is stalled: able to synthesize DNA primers downstream of lesions, such as UV lesions, R-loops and G-quadruplexes, to allow DNA replication to continue. Can also realign primers ahead of 'unreadable lesions' such as abasic sites and 6-4 photoproduct (6-4 pyrimidine-pyrimidinone), thereby skipping the lesion. Repriming avoids fork degradation while leading to accumulation of internal ssDNA gaps behind the forks. Also able to incorporate nucleotides opposite DNA lesions such as 8oxoG, like a regular translesion synthesis DNA polymerase. Also required for reinitiating stalled forks after ultraviolet (UV) damage during nuclear DNA replication. Required for mitochondrial DNA (mtDNA) synthesis and replication, by reinitiating synthesis after UV damage or in the presence of chain-terminating nucleotides. In addition to its role in DNA damage response, also required to maintain efficient nuclear and mitochondrial DNA replication in unperturbed cells. This chain is DNA-directed primase/polymerase protein, found in Danio rerio (Zebrafish).